The sequence spans 591 residues: Transcriptional regulator PUL4 (591 aa).

Positions 3-29 form a DNA-binding region, zn(2)-C6 fungal-type; it reads CLECKKRKQKCDGQKPCRRCTKLNVKC.

The protein localises to the nucleus. In terms of biological role, transcription factor involved in regulation of the PUL gene cluster that mediates the formation of pulcherrimin, a red iron-containing pigment composed of two cyclized and modified leucine molecules that acts as a siderophore, a chelator that binds iron outside the cell for subsequent uptake. The polypeptide is Transcriptional regulator PUL4 (Kluyveromyces lactis (strain ATCC 8585 / CBS 2359 / DSM 70799 / NBRC 1267 / NRRL Y-1140 / WM37) (Yeast)).